We begin with the raw amino-acid sequence, 530 residues long: Na(+)/H(+) antiporter NhaB (530 aa).

10 helical membrane passes run 13 to 33, 67 to 87, 90 to 110, 138 to 158, 205 to 225, 245 to 265, 302 to 333, 350 to 370, 449 to 469, and 477 to 497; these read FLGQ…LINP, PGGL…ETVL, VVGN…IYFL, AAAL…VIAV, LLMH…VGEP, MAPI…FLEF, LVIQ…VIIL, FEEA…VAVI, VATP…LAPL, and MVIM…VMTA.

The protein belongs to the NhaB Na(+)/H(+) (TC 2.A.34) antiporter family.

The protein localises to the cell inner membrane. The enzyme catalyses 2 Na(+)(in) + 3 H(+)(out) = 2 Na(+)(out) + 3 H(+)(in). Na(+)/H(+) antiporter that extrudes sodium in exchange for external protons. In Alcanivorax borkumensis (strain ATCC 700651 / DSM 11573 / NCIMB 13689 / SK2), this protein is Na(+)/H(+) antiporter NhaB.